A 341-amino-acid polypeptide reads, in one-letter code: LRP2-binding protein (341 aa).

One copy of the TPR repeat lies at 56–89 (VQANFLLGQLFFEEGWYEDALLQFEKVKDEDNQA). 6 Sel1-like repeats span residues 90-122 (LYQA…TSDC), 130-165 (YAAA…DNGN), 170-203 (LKAQ…GNGS), 204-239 (LESQ…ERGN), 240-271 (VYAQ…SHDN), and 291-326 (AIAT…QLDA).

It localises to the cytoplasm. May act as an adapter that regulates LRP2 function. The sequence is that of LRP2-binding protein (lrp2bp) from Xenopus laevis (African clawed frog).